Consider the following 572-residue polypeptide: Proline--tRNA ligase (572 aa).

The protein belongs to the class-II aminoacyl-tRNA synthetase family. ProS type 1 subfamily. Homodimer.

Its subcellular location is the cytoplasm. It carries out the reaction tRNA(Pro) + L-proline + ATP = L-prolyl-tRNA(Pro) + AMP + diphosphate. Its function is as follows. Catalyzes the attachment of proline to tRNA(Pro) in a two-step reaction: proline is first activated by ATP to form Pro-AMP and then transferred to the acceptor end of tRNA(Pro). As ProRS can inadvertently accommodate and process non-cognate amino acids such as alanine and cysteine, to avoid such errors it has two additional distinct editing activities against alanine. One activity is designated as 'pretransfer' editing and involves the tRNA(Pro)-independent hydrolysis of activated Ala-AMP. The other activity is designated 'posttransfer' editing and involves deacylation of mischarged Ala-tRNA(Pro). The misacylated Cys-tRNA(Pro) is not edited by ProRS. This Escherichia coli O157:H7 protein is Proline--tRNA ligase.